A 310-amino-acid polypeptide reads, in one-letter code: Glycine-rich RNA-binding protein RZ1C (310 aa).

An RRM domain is found at 7–85 (SRIFVGGLSP…RVISVNRAEP (79 aa)). Ser15 carries the post-translational modification Phosphoserine. Positions 82 to 120 (RAEPKLGRDDGESHGSRGGRDSGYSIAGKGSFGGGGGGG) are disordered. Positions 83–101 (AEPKLGRDDGESHGSRGGR) are enriched in basic and acidic residues. Gly residues predominate over residues 111 to 120 (GSFGGGGGGG). The segment at 128 to 143 (CFKCGRVGHWARDCPS) adopts a CCHC-type zinc-finger fold. The segment at 224 to 310 (RFAGGDRYSR…YPSSSTFDRY (87 aa)) is disordered. Basic and acidic residues-rich tracts occupy residues 226–236 (AGGDRYSRGSD) and 244–253 (DKARSFERDI). Over residues 261–273 (RYGGGRAGGPIRG) the composition is skewed to gly residues. A Phosphoserine modification is found at Ser295.

As to expression, expressed in roots, rosette and cauline leaves, stems, floral buds and flowers.

It localises to the nucleus. In terms of biological role, binds RNA and DNA sequences non-specifically. May be involved in tolerance to cold stress. This Arabidopsis thaliana (Mouse-ear cress) protein is Glycine-rich RNA-binding protein RZ1C.